Reading from the N-terminus, the 458-residue chain is Bifunctional thioredoxin reductase/thioredoxin (458 aa).

Residues 1 to 321 (MNTTPSAHET…LAEHAGSKAN (321 aa)) form a thioredoxin reductase region. FAD contacts are provided by residues 19 to 22 (SGPA), 41 to 48 (EGTSFGGA), N57, and V90. A disulfide bond links C142 and C145. Positions 163, 182, 188, 245, and 265 each coordinate NADP(+). Residues D285 and 292-295 (RQAI) each bind FAD. R292 lines the NADP(+) pocket. Positions 322–347 (ETTEETGDVDSTDTTDWSTAMTDAKN) are linker. Residues 341–455 (AMTDAKNAGV…LLRDLSDVVP (115 aa)) form the Thioredoxin domain. C379 and C382 form a disulfide bridge.

In the N-terminal section; belongs to the class-II pyridine nucleotide-disulfide oxidoreductase family. In terms of assembly, homodimer. It depends on FAD as a cofactor.

Its subcellular location is the cytoplasm. It carries out the reaction [thioredoxin]-dithiol + NADP(+) = [thioredoxin]-disulfide + NADPH + H(+). The chain is Bifunctional thioredoxin reductase/thioredoxin (trxB/A) from Mycobacterium leprae (strain TN).